A 322-amino-acid chain; its full sequence is SUMO-activating enzyme subunit 1A (322 aa).

Methionine 1 bears the N-acetylmethionine mark.

Belongs to the ubiquitin-activating E1 family. Heterodimer of SAE1A or SAE1B and SAE2. The complex binds SUMO proteins via SAE2.

It localises to the nucleus. The protein operates within protein modification; protein sumoylation. In terms of biological role, the dimeric enzyme acts as an E1 ligase for SUMO1 and SUMO2. It mediates ATP-dependent activation of SUMO proteins and formation of a thioester with a conserved cysteine residue on SAE2. Functionally redundant with its paralog SAE1B. This chain is SUMO-activating enzyme subunit 1A (SAE1A), found in Arabidopsis thaliana (Mouse-ear cress).